The sequence spans 296 residues: Elongation factor Ts (296 aa).

The segment at 79-82 (TDFV) is involved in Mg(2+) ion dislocation from EF-Tu.

The protein belongs to the EF-Ts family.

The protein localises to the cytoplasm. Its function is as follows. Associates with the EF-Tu.GDP complex and induces the exchange of GDP to GTP. It remains bound to the aminoacyl-tRNA.EF-Tu.GTP complex up to the GTP hydrolysis stage on the ribosome. The chain is Elongation factor Ts from Acholeplasma laidlawii (strain PG-8A).